Consider the following 451-residue polypeptide: ADP-specific phosphofructokinase (451 aa).

Residues 1 to 450 form the ADPK domain; it reads MSVPQDVSIF…FITYVNYLKR (450 aa). The Mg(2+) site is built by Glu-261, Glu-291, and Asp-434. Catalysis depends on Asp-434, which acts as the Proton acceptor.

It belongs to the carbohydrate kinase PfkC family. Mg(2+) serves as cofactor.

The protein localises to the cytoplasm. It catalyses the reaction beta-D-fructose 6-phosphate + ADP = beta-D-fructose 1,6-bisphosphate + AMP + H(+). It participates in carbohydrate degradation; glycolysis. Catalyzes the phosphorylation of fructose 6-phosphate to fructose 1,6-bisphosphate using ADP as the phosphate donor. In Pyrococcus abyssi (strain GE5 / Orsay), this protein is ADP-specific phosphofructokinase.